The primary structure comprises 226 residues: ATP-dependent dethiobiotin synthetase BioD (226 aa).

Position 12 to 17 (12 to 17) interacts with ATP; the sequence is EVGKTV. T16 is a binding site for Mg(2+). The active site involves K39. Position 43 (T43) interacts with substrate. ATP-binding positions include D47, 108–111, 168–169, and 200–202; these read EALG, NC, and PYI. Residues D47 and E108 each coordinate Mg(2+).

Belongs to the dethiobiotin synthetase family. As to quaternary structure, homodimer. The cofactor is Mg(2+).

It is found in the cytoplasm. It carries out the reaction (7R,8S)-7,8-diammoniononanoate + CO2 + ATP = (4R,5S)-dethiobiotin + ADP + phosphate + 3 H(+). It catalyses the reaction (7R,8S)-8-amino-7-(carboxyamino)nonanoate + ATP = (4R,5S)-dethiobiotin + ADP + phosphate + H(+). The protein operates within cofactor biosynthesis; biotin biosynthesis; biotin from 7,8-diaminononanoate: step 1/2. Functionally, catalyzes a mechanistically unusual reaction, the ATP-dependent insertion of CO2 between the N7 and N8 nitrogen atoms of 7,8-diaminopelargonic acid (DAPA, also called 7,8-diammoniononanoate) to form a ureido ring. This cyanobacterium does not encode bioA (which catalyzes the formation of the precursor for this reaction in the cannonical pathway), instead it encodes bioU, which replaces bioA and also performs the first half of the cannonical BioD reaction. Thus in this organism BioD has a different substrate. The sequence is that of ATP-dependent dethiobiotin synthetase BioD from Gloeothece citriformis (strain PCC 7424) (Cyanothece sp. (strain PCC 7424)).